A 526-amino-acid chain; its full sequence is D-arabinono-1,4-lactone oxidase (526 aa).

Positions F22–A196 constitute an FAD-binding PCMH-type domain. A Pros-8alpha-FAD histidine modification is found at H59.

It belongs to the oxygen-dependent FAD-linked oxidoreductase family. FAD serves as cofactor.

It is found in the mitochondrion membrane. The catalysed reaction is D-arabinono-1,4-lactone + O2 = dehydro-D-arabinono-1,4-lactone + H2O2 + H(+). Its pathway is cofactor biosynthesis; D-erythroascorbate biosynthesis; dehydro-D-arabinono-1,4-lactone from D-arabinose: step 2/2. The sequence is that of D-arabinono-1,4-lactone oxidase (ALO1) from Yarrowia lipolytica (strain CLIB 122 / E 150) (Yeast).